We begin with the raw amino-acid sequence, 160 residues long: Troponin C, isoform 2 (160 aa).

EF-hand domains lie at 15–50, 51–86, 92–127, and 128–160; these read DQIE…MGQA, FEER…FVVN, GLEE…LDDN, and VSEE…MSGE. Ca(2+) is bound by residues D64, D66, S68, E70, and E75. Ca(2+)-binding residues include D141, D143, S145, T147, and E152.

The protein belongs to the troponin C family. As to expression, pharyngeal muscle.

This is Troponin C, isoform 2 (tnc-2) from Caenorhabditis elegans.